The chain runs to 211 residues: Small ribosomal subunit protein uS3 (211 aa).

A KH type-2 domain is found at 38 to 106; it reads LRSFVKKTFH…DVELHIVEVK (69 aa).

The protein belongs to the universal ribosomal protein uS3 family. In terms of assembly, part of the 30S ribosomal subunit. Forms a tight complex with proteins S10 and S14.

Functionally, binds the lower part of the 30S subunit head. Binds mRNA in the 70S ribosome, positioning it for translation. The sequence is that of Small ribosomal subunit protein uS3 from Anaplasma marginale (strain Florida).